A 346-amino-acid chain; its full sequence is Phosphoribosylformylglycinamidine cyclo-ligase (346 aa).

The protein belongs to the AIR synthase family.

It is found in the cytoplasm. The catalysed reaction is 2-formamido-N(1)-(5-O-phospho-beta-D-ribosyl)acetamidine + ATP = 5-amino-1-(5-phospho-beta-D-ribosyl)imidazole + ADP + phosphate + H(+). Its pathway is purine metabolism; IMP biosynthesis via de novo pathway; 5-amino-1-(5-phospho-D-ribosyl)imidazole from N(2)-formyl-N(1)-(5-phospho-D-ribosyl)glycinamide: step 2/2. This Bacillus anthracis (strain A0248) protein is Phosphoribosylformylglycinamidine cyclo-ligase.